A 354-amino-acid chain; its full sequence is MRKIIHIDMDAFYASVEQRDNPELRGKPVAVGYPEARGVVAAASYEARKFGVHSAMPSVTAKRKCPELIFVPHRFDVYRAVSRQIQAIFAEYTPLVEPLSLDEAYLDVTENFRGLKLATEIAEEIRGRIRAETHLTASAGVSYNKFLAKMASDQRKPDGLFVITPKHGPDFVQALPVKKFHGVGPATAEKMKRLGIETGADLKSRDLAFLQQHFGKSGPYFYWIARGIDERKVKPDRIRKSIGAEDTFREDVHDLETARAGLKPLIDKVWHYCEASGIRGKTMTLKVKWADFTQITRSKTIVAPIASVAEMSEIAELLLSPIFPAPKGIRLLGVTLSSLDTVDDRSEPQLALAL.

In terms of domain architecture, UmuC spans 4-184 (IIHIDMDAFY…LPVKKFHGVG (181 aa)). Mg(2+)-binding residues include Asp8 and Asp102. The active site involves Glu103.

Belongs to the DNA polymerase type-Y family. As to quaternary structure, monomer. Mg(2+) serves as cofactor.

Its subcellular location is the cytoplasm. The catalysed reaction is DNA(n) + a 2'-deoxyribonucleoside 5'-triphosphate = DNA(n+1) + diphosphate. In terms of biological role, poorly processive, error-prone DNA polymerase involved in untargeted mutagenesis. Copies undamaged DNA at stalled replication forks, which arise in vivo from mismatched or misaligned primer ends. These misaligned primers can be extended by PolIV. Exhibits no 3'-5' exonuclease (proofreading) activity. May be involved in translesional synthesis, in conjunction with the beta clamp from PolIII. The chain is DNA polymerase IV 2 (dinB2) from Rhizobium meliloti (strain 1021) (Ensifer meliloti).